Reading from the N-terminus, the 264-residue chain is Protein OXIDATIVE STRESS 3 LIKE 1 (264 aa).

Disordered regions lie at residues 1–76 (MDCV…GPLE) and 178–225 (TGEG…QGSF). The segment covering 29 to 43 (PSDSSSSPSSSASSS) has biased composition (low complexity). A compositionally biased stretch (basic and acidic residues) spans 47-56 (NSDDGEKSSE). A compositionally biased stretch (acidic residues) spans 57-67 (DGGDDAGENEV). Residues 179–201 (GEGSSSGGDSSPGSSPTTSGSPP) are compositionally biased toward low complexity. Basic residues predominate over residues 203 to 212 (QLHHHQHQMK).

The protein localises to the nucleus. In terms of biological role, promotes slightly the tolerance to zinc (Zn) and to oxidizing chemicals (e.g. diamide). This Arabidopsis thaliana (Mouse-ear cress) protein is Protein OXIDATIVE STRESS 3 LIKE 1.